A 212-amino-acid chain; its full sequence is ER lumen protein-retaining receptor 1 (212 aa).

Residues 1–4 are Lumenal-facing; sequence MNLF. The chain crosses the membrane as a helical span at residues 5–24; sequence RFLGDLSHLLAIILLLLKIW. The Cytoplasmic portion of the chain corresponds to 25–32; sequence KSRSCAGI. The chain crosses the membrane as a helical span at residues 33-52; the sequence is SGKSQVLFAVVFTARYLDLF. The interaction with the K-D-E-L motif on target proteins stretch occupies residues 47 to 48; sequence RY. Residues 53-58 are Lumenal-facing; it reads TNYISL. A helical transmembrane segment spans residues 59 to 79; it reads YNTCMKVVYIACSFTTVWMIY. The Cytoplasmic segment spans residues 80 to 92; it reads SKFKATYDGNHDT. The chain crosses the membrane as a helical span at residues 93–110; that stretch reads FRVEFLVVPTAILAFLVN. The Lumenal segment spans residues 111 to 116; it reads HDFTPL. A helical transmembrane segment spans residues 117 to 135; sequence EILWTFSIYLESVAILPQL. Over 136–149 the chain is Cytoplasmic; the sequence is FMVSKTGEAETITS. A helical membrane pass occupies residues 150–168; it reads HYLFALGVYRTLYLFNWIW. Positions 159-169 are interaction with the K-D-E-L motif on target proteins; that stretch reads RTLYLFNWIWR. Topologically, residues 169–178 are lumenal; it reads RYHFEGFFDL. Residues 179 to 199 form a helical membrane-spanning segment; sequence IAIVAGLVQTVLYCDFFYLYI. The Cytoplasmic portion of the chain corresponds to 200–212; the sequence is TKVLKGKKLSLPA. Residues 204–207 are important for recycling of cargo proteins with the sequence motif K-D-E-L from the Golgi to the endoplasmic reticulum; the sequence is KGKK. S209 bears the Phosphoserine; by PKA mark.

Belongs to the ERD2 family. In terms of assembly, upon ligand binding the receptor oligomerizes and interacts with components of the transport machinery such as ARFGAP1 and ARF1. In terms of processing, phosphorylation by PKA at Ser-209 is required for endoplasmic reticulum retention function.

The protein localises to the golgi apparatus membrane. Its subcellular location is the cytoplasmic vesicle. It is found in the COPI-coated vesicle membrane. It localises to the endoplasmic reticulum membrane. The protein resides in the endoplasmic reticulum-Golgi intermediate compartment membrane. In terms of biological role, receptor for the C-terminal sequence motif K-D-E-L that is present on endoplasmic reticulum resident proteins and that mediates their recycling from the Golgi back to the endoplasmic reticulum. In Mus musculus (Mouse), this protein is ER lumen protein-retaining receptor 1 (Kdelr1).